Reading from the N-terminus, the 439-residue chain is Aspartate--tRNA(Asp/Asn) ligase (439 aa).

Glu177 lines the L-aspartate pocket. Residues 199–202 (QLYK) form an aspartate region. Arg221 provides a ligand contact to L-aspartate. Residues 221–223 (RAE), 229–231 (RHL), and Glu362 each bind ATP. Glu362 and Ser365 together coordinate Mg(2+). Residues Ser365 and Arg369 each coordinate L-aspartate. 410 to 413 (GADR) contributes to the ATP binding site.

Belongs to the class-II aminoacyl-tRNA synthetase family. Type 2 subfamily. As to quaternary structure, homodimer. The cofactor is Mg(2+).

It is found in the cytoplasm. It catalyses the reaction tRNA(Asx) + L-aspartate + ATP = L-aspartyl-tRNA(Asx) + AMP + diphosphate. In terms of biological role, aspartyl-tRNA synthetase with relaxed tRNA specificity since it is able to aspartylate not only its cognate tRNA(Asp) but also tRNA(Asn). Reaction proceeds in two steps: L-aspartate is first activated by ATP to form Asp-AMP and then transferred to the acceptor end of tRNA(Asp/Asn). This chain is Aspartate--tRNA(Asp/Asn) ligase, found in Methanosphaera stadtmanae (strain ATCC 43021 / DSM 3091 / JCM 11832 / MCB-3).